We begin with the raw amino-acid sequence, 101 residues long: Nucleoid-associated protein Bind_0255 (101 aa).

The protein belongs to the YbaB/EbfC family. In terms of assembly, homodimer.

The protein localises to the cytoplasm. It localises to the nucleoid. Functionally, binds to DNA and alters its conformation. May be involved in regulation of gene expression, nucleoid organization and DNA protection. The sequence is that of Nucleoid-associated protein Bind_0255 from Beijerinckia indica subsp. indica (strain ATCC 9039 / DSM 1715 / NCIMB 8712).